Here is an 89-residue protein sequence, read N- to C-terminus: Small ribosomal subunit protein uS15 (89 aa).

This sequence belongs to the universal ribosomal protein uS15 family. In terms of assembly, part of the 30S ribosomal subunit. Forms a bridge to the 50S subunit in the 70S ribosome, contacting the 23S rRNA.

One of the primary rRNA binding proteins, it binds directly to 16S rRNA where it helps nucleate assembly of the platform of the 30S subunit by binding and bridging several RNA helices of the 16S rRNA. Its function is as follows. Forms an intersubunit bridge (bridge B4) with the 23S rRNA of the 50S subunit in the ribosome. The sequence is that of Small ribosomal subunit protein uS15 from Streptococcus pyogenes serotype M2 (strain MGAS10270).